Consider the following 314-residue polypeptide: Small glutamine-rich tetratricopeptide repeat-containing protein alpha (314 aa).

The tract at residues 65-99 (ATASKEMPQDPRGPDRTPPSEEDSAEAERLKTEGN) is disordered. Over residues 71–83 (MPQDPRGPDRTPP) the composition is skewed to basic and acidic residues. A Phosphothreonine modification is found at T81. At S84 the chain carries Phosphoserine. The segment covering 90 to 99 (EAERLKTEGN) has biased composition (basic and acidic residues). 3 TPR repeats span residues 91–124 (AERL…NPAN), 125–158 (AVYF…DPGY), and 159–192 (SKAY…DPDN). K137 bears the N6-acetyllysine mark. The tract at residues 249–268 (GMISGGHNPLGTPGSSPQHS) is disordered. S302 carries the post-translational modification Phosphoserine. T304 is modified (phosphothreonine). Position 306 is a phosphoserine (S306).

This sequence belongs to the SGT family. As to quaternary structure, homodimer. Homooligomer. Interacts with DNAJC5 and DNAJC5B. Interacts (via TPR repeats) with HSP90AA1. Interacts (via Gln-rich region) with SLC2A1. Interacts with HSP90AB1. Interacts (via TPR repeats) with HSPA8/Hsc70; the interaction is direct. Interacts with BAG6 (via ubiquitin-like domain); interaction prevents interaction between BAG6 and RNF126. Forms a multiprotein complex, at least composed of DNAJB12, DNAJB14, HSPA8/Hsc70 and SGTA; interaction with DNAJB14 and HSPA8/Hsc70 is direct. In terms of assembly, (Microbial infection) Interacts with NS1 from parvovirus H-1. Ubiquitously expressed.

It is found in the cytoplasm. Its subcellular location is the nucleus. Its function is as follows. Co-chaperone that binds misfolded and hydrophobic patches-containing client proteins in the cytosol. Mediates their targeting to the endoplasmic reticulum but also regulates their sorting to the proteasome when targeting fails. Functions in tail-anchored/type II transmembrane proteins membrane insertion constituting with ASNA1 and the BAG6 complex a targeting module. Functions upstream of the BAG6 complex and ASNA1, binding more rapidly the transmembrane domain of newly synthesized proteins. It is also involved in the regulation of the endoplasmic reticulum-associated misfolded protein catabolic process via its interaction with BAG6: collaborates with the BAG6 complex to maintain hydrophobic substrates in non-ubiquitinated states. Competes with RNF126 for interaction with BAG6, preventing the ubiquitination of client proteins associated with the BAG6 complex. Binds directly to HSC70 and HSP70 and regulates their ATPase activity. The sequence is that of Small glutamine-rich tetratricopeptide repeat-containing protein alpha (Sgta) from Rattus norvegicus (Rat).